We begin with the raw amino-acid sequence, 207 residues long: Holliday junction branch migration complex subunit RuvA (207 aa).

Residues 1-64 (MIGRLRGNLL…EDAQLLYGFN (64 aa)) are domain I. Residues 65 to 143 (TKNERALFRE…GWGAGDLFTP (79 aa)) are domain II. The tract at residues 144 to 158 (ATDAAPMDDGSEFIT) is flexible linker. The tract at residues 159–207 (SPQSAVDEAVSALIALGYKPQQASKTVSQIAKPDMTSEVLIRESLKSMI) is domain III.

This sequence belongs to the RuvA family. In terms of assembly, homotetramer. Forms an RuvA(8)-RuvB(12)-Holliday junction (HJ) complex. HJ DNA is sandwiched between 2 RuvA tetramers; dsDNA enters through RuvA and exits via RuvB. An RuvB hexamer assembles on each DNA strand where it exits the tetramer. Each RuvB hexamer is contacted by two RuvA subunits (via domain III) on 2 adjacent RuvB subunits; this complex drives branch migration. In the full resolvosome a probable DNA-RuvA(4)-RuvB(12)-RuvC(2) complex forms which resolves the HJ.

It is found in the cytoplasm. In terms of biological role, the RuvA-RuvB-RuvC complex processes Holliday junction (HJ) DNA during genetic recombination and DNA repair, while the RuvA-RuvB complex plays an important role in the rescue of blocked DNA replication forks via replication fork reversal (RFR). RuvA specifically binds to HJ cruciform DNA, conferring on it an open structure. The RuvB hexamer acts as an ATP-dependent pump, pulling dsDNA into and through the RuvAB complex. HJ branch migration allows RuvC to scan DNA until it finds its consensus sequence, where it cleaves and resolves the cruciform DNA. In Aliivibrio fischeri (strain ATCC 700601 / ES114) (Vibrio fischeri), this protein is Holliday junction branch migration complex subunit RuvA.